Here is an 89-residue protein sequence, read N- to C-terminus: Small ribosomal subunit protein uS15 (89 aa).

It belongs to the universal ribosomal protein uS15 family. As to quaternary structure, part of the 30S ribosomal subunit. Forms a bridge to the 50S subunit in the 70S ribosome, contacting the 23S rRNA.

One of the primary rRNA binding proteins, it binds directly to 16S rRNA where it helps nucleate assembly of the platform of the 30S subunit by binding and bridging several RNA helices of the 16S rRNA. In terms of biological role, forms an intersubunit bridge (bridge B4) with the 23S rRNA of the 50S subunit in the ribosome. In Vibrio cholerae serotype O1 (strain ATCC 39541 / Classical Ogawa 395 / O395), this protein is Small ribosomal subunit protein uS15.